Reading from the N-terminus, the 159-residue chain is Elicitor-responsive protein 1 (159 aa).

The C2 domain occupies 1–112 (MAGSGVLEVH…SLGMEHGTWE (112 aa)). 2 residues coordinate Ca(2+): Asp-21 and Asp-30. At Ser-44 the chain carries Phosphoserine; by CPK. Ca(2+) contacts are provided by Asp-81, Asp-83, Ser-86, and Asp-89.

It depends on Ca(2+) as a cofactor. Post-translationally, phosphorylated at Ser-44 by CPK18 in a calcium-dependent manner. Isoform 2 is expressed in young vascular tissues and tiller buds.

The protein resides in the cytoplasm. The protein localises to the cell membrane. In terms of biological role, may play a role in plant defense signaling. Isoform 2 binds to phospholipids in a Ca(2+)-dependent manner in response to pathogen elicitors. The protein is Elicitor-responsive protein 1 (ERG1) of Oryza sativa subsp. japonica (Rice).